The primary structure comprises 178 residues: Crossover junction endodeoxyribonuclease RuvC (178 aa).

Active-site residues include aspartate 11, glutamate 71, and aspartate 143. Mg(2+)-binding residues include aspartate 11, glutamate 71, and aspartate 143.

It belongs to the RuvC family. Homodimer which binds Holliday junction (HJ) DNA. The HJ becomes 2-fold symmetrical on binding to RuvC with unstacked arms; it has a different conformation from HJ DNA in complex with RuvA. In the full resolvosome a probable DNA-RuvA(4)-RuvB(12)-RuvC(2) complex forms which resolves the HJ. Requires Mg(2+) as cofactor.

The protein localises to the cytoplasm. The enzyme catalyses Endonucleolytic cleavage at a junction such as a reciprocal single-stranded crossover between two homologous DNA duplexes (Holliday junction).. In terms of biological role, the RuvA-RuvB-RuvC complex processes Holliday junction (HJ) DNA during genetic recombination and DNA repair. Endonuclease that resolves HJ intermediates. Cleaves cruciform DNA by making single-stranded nicks across the HJ at symmetrical positions within the homologous arms, yielding a 5'-phosphate and a 3'-hydroxyl group; requires a central core of homology in the junction. The consensus cleavage sequence is 5'-(A/T)TT(C/G)-3'. Cleavage occurs on the 3'-side of the TT dinucleotide at the point of strand exchange. HJ branch migration catalyzed by RuvA-RuvB allows RuvC to scan DNA until it finds its consensus sequence, where it cleaves and resolves the cruciform DNA. This is Crossover junction endodeoxyribonuclease RuvC from Neisseria meningitidis serogroup A / serotype 4A (strain DSM 15465 / Z2491).